A 260-amino-acid polypeptide reads, in one-letter code: Hydroxyethylthiazole kinase 2 (260 aa).

Methionine 40 serves as a coordination point for substrate. ATP-binding residues include arginine 116 and threonine 161. Alanine 188 is a substrate binding site.

It belongs to the Thz kinase family. Mg(2+) serves as cofactor.

The catalysed reaction is 5-(2-hydroxyethyl)-4-methylthiazole + ATP = 4-methyl-5-(2-phosphooxyethyl)-thiazole + ADP + H(+). Its pathway is cofactor biosynthesis; thiamine diphosphate biosynthesis; 4-methyl-5-(2-phosphoethyl)-thiazole from 5-(2-hydroxyethyl)-4-methylthiazole: step 1/1. In terms of biological role, catalyzes the phosphorylation of the hydroxyl group of 4-methyl-5-beta-hydroxyethylthiazole (THZ). The polypeptide is Hydroxyethylthiazole kinase 2 (Oceanobacillus iheyensis (strain DSM 14371 / CIP 107618 / JCM 11309 / KCTC 3954 / HTE831)).